Reading from the N-terminus, the 241-residue chain is Triosephosphate isomerase (241 aa).

9–11 contacts substrate; that stretch reads NWK. His96 acts as the Electrophile in catalysis. Glu165 serves as the catalytic Proton acceptor. Substrate-binding positions include Gly171, Ser204, and 225 to 226; that span reads GG.

The protein belongs to the triosephosphate isomerase family. Homodimer.

It is found in the cytoplasm. The enzyme catalyses D-glyceraldehyde 3-phosphate = dihydroxyacetone phosphate. Its pathway is carbohydrate biosynthesis; gluconeogenesis. The protein operates within carbohydrate degradation; glycolysis; D-glyceraldehyde 3-phosphate from glycerone phosphate: step 1/1. Involved in the gluconeogenesis. Catalyzes stereospecifically the conversion of dihydroxyacetone phosphate (DHAP) to D-glyceraldehyde-3-phosphate (G3P). This is Triosephosphate isomerase from Acaryochloris marina (strain MBIC 11017).